We begin with the raw amino-acid sequence, 332 residues long: tRNA-dihydrouridine synthase B (332 aa).

FMN is bound by residues 19–21 (PMA) and glutamine 73. The active-site Proton donor is the cysteine 103. FMN-binding positions include lysine 142, 203-205 (NGD), and 227-228 (GR).

Belongs to the Dus family. DusB subfamily. It depends on FMN as a cofactor.

The enzyme catalyses a 5,6-dihydrouridine in tRNA + NAD(+) = a uridine in tRNA + NADH + H(+). It carries out the reaction a 5,6-dihydrouridine in tRNA + NADP(+) = a uridine in tRNA + NADPH + H(+). Catalyzes the synthesis of 5,6-dihydrouridine (D), a modified base found in the D-loop of most tRNAs, via the reduction of the C5-C6 double bond in target uridines. The sequence is that of tRNA-dihydrouridine synthase B from Pseudomonas aeruginosa (strain ATCC 15692 / DSM 22644 / CIP 104116 / JCM 14847 / LMG 12228 / 1C / PRS 101 / PAO1).